The following is a 250-amino-acid chain: 3-deoxy-manno-octulosonate cytidylyltransferase (250 aa).

The protein belongs to the KdsB family.

Its subcellular location is the cytoplasm. The enzyme catalyses 3-deoxy-alpha-D-manno-oct-2-ulosonate + CTP = CMP-3-deoxy-beta-D-manno-octulosonate + diphosphate. The protein operates within nucleotide-sugar biosynthesis; CMP-3-deoxy-D-manno-octulosonate biosynthesis; CMP-3-deoxy-D-manno-octulosonate from 3-deoxy-D-manno-octulosonate and CTP: step 1/1. It participates in bacterial outer membrane biogenesis; lipopolysaccharide biosynthesis. In terms of biological role, activates KDO (a required 8-carbon sugar) for incorporation into bacterial lipopolysaccharide in Gram-negative bacteria. The chain is 3-deoxy-manno-octulosonate cytidylyltransferase from Yersinia enterocolitica serotype O:8 / biotype 1B (strain NCTC 13174 / 8081).